The primary structure comprises 342 residues: N-acetyl-gamma-glutamyl-phosphate reductase (342 aa).

C149 is a catalytic residue.

It belongs to the NAGSA dehydrogenase family. Type 1 subfamily.

It localises to the cytoplasm. It catalyses the reaction N-acetyl-L-glutamate 5-semialdehyde + phosphate + NADP(+) = N-acetyl-L-glutamyl 5-phosphate + NADPH + H(+). It functions in the pathway amino-acid biosynthesis; L-arginine biosynthesis; N(2)-acetyl-L-ornithine from L-glutamate: step 3/4. Catalyzes the NADPH-dependent reduction of N-acetyl-5-glutamyl phosphate to yield N-acetyl-L-glutamate 5-semialdehyde. This is N-acetyl-gamma-glutamyl-phosphate reductase from Nitrosospira multiformis (strain ATCC 25196 / NCIMB 11849 / C 71).